The chain runs to 592 residues: Aspartate--tRNA ligase (592 aa).

An L-aspartate-binding site is contributed by E171. The aspartate stretch occupies residues Q195–K198. R217 is a binding site for L-aspartate. ATP contacts are provided by residues R217–E219 and Q226. An L-aspartate-binding site is contributed by H448. E482 provides a ligand contact to ATP. R489 contributes to the L-aspartate binding site. Residue G534–R537 coordinates ATP.

This sequence belongs to the class-II aminoacyl-tRNA synthetase family. Type 1 subfamily. In terms of assembly, homodimer.

Its subcellular location is the cytoplasm. The catalysed reaction is tRNA(Asp) + L-aspartate + ATP = L-aspartyl-tRNA(Asp) + AMP + diphosphate. In terms of biological role, catalyzes the attachment of L-aspartate to tRNA(Asp) in a two-step reaction: L-aspartate is first activated by ATP to form Asp-AMP and then transferred to the acceptor end of tRNA(Asp). In Vibrio campbellii (strain ATCC BAA-1116), this protein is Aspartate--tRNA ligase.